We begin with the raw amino-acid sequence, 643 residues long: Pescadillo homolog (643 aa).

One can recognise a BRCT domain in the interval 319–412; that stretch reads KLKTLFKGLK…RLLPTNKYFM (94 aa). Disordered stretches follow at residues 437–475, 492–571, and 609–643; these read AARK…PENE, TDSL…YREN, and DKNA…QILA. The span at 464-475 shows a compositional bias: acidic residues; that stretch reads SDDEEVQDPENE. Basic and acidic residues predominate over residues 492-518; it reads TDSLNSGKKEGADDATDNGKDAAEKKQ. Residues 524–544 show a composition bias toward acidic residues; the sequence is GESDDEDEEEEDDDDGEEEED. Positions 569 to 643 form a coiled coil; that stretch reads RENEAEKKIV…QKQQRKQILA (75 aa). A compositionally biased stretch (basic and acidic residues) spans 609–635; the sequence is DKNARLLANKRERIEKQKRAEQMEKQK.

The protein belongs to the pescadillo family.

The protein resides in the nucleus. Its subcellular location is the nucleolus. It localises to the nucleoplasm. Functionally, required for maturation of ribosomal RNAs and formation of the large ribosomal subunit. This Anopheles gambiae (African malaria mosquito) protein is Pescadillo homolog.